We begin with the raw amino-acid sequence, 124 residues long: AESSAMKFERQHVDSGGSSSSNANYCNEMMKKREMTKDRCKPVNTFVHEPLAEVQAVCSQRNVSCKNGQTNCYQSYSSMHITECRLTSGSKFPNCSYRTSQAQKSIIVACEGKPYVPVHFDNSV.

Residues 1 to 24 are disordered; sequence AESSAMKFERQHVDSGGSSSSNAN. K7 and R10 together coordinate substrate. H12 serves as the catalytic Proton acceptor. 4 disulfide bridges follow: C26–C84, C40–C95, C58–C110, and C65–C72. Substrate-binding positions include 41 to 45, K66, and R85; that span reads KPVNT. Catalysis depends on H119, which acts as the Proton donor.

Belongs to the pancreatic ribonuclease family. Pancreas.

Its subcellular location is the secreted. It catalyses the reaction an [RNA] containing cytidine + H2O = an [RNA]-3'-cytidine-3'-phosphate + a 5'-hydroxy-ribonucleotide-3'-[RNA].. The catalysed reaction is an [RNA] containing uridine + H2O = an [RNA]-3'-uridine-3'-phosphate + a 5'-hydroxy-ribonucleotide-3'-[RNA].. This chain is Ribonuclease pancreatic A, found in Cavia porcellus (Guinea pig).